The following is a 281-amino-acid chain: MATQNAILKKALIIFLFTLTIMTGTAFSQNCGTNGCKGNMCCSRWGYCGTTKAYCGTGCQSGPCNSKPKPTPTPSGSGGLNAGPRGTIASVITPAFFNSIMSKVGSGCPAKGFYTRQAFIAAAESFAAYKGTVAKREIAAMLAQFSHESGSFCYKEEIARGRYCSPSTTYPCQPGKNYYGRGPIQITWNYNYGAAGKFLGLPLLKDPDMVARSPTVAFQCAMWFWNKNVRPVLSQGFGATTRRINGGECNGGRPAAVQSRVNHYLDFCKKLGVTPGTNLSC.

The N-terminal stretch at 1 to 28 is a signal peptide; sequence MATQNAILKKALIIFLFTLTIMTGTAFS. The region spanning 29 to 66 is the Chitin-binding type-1 domain; that stretch reads QNCGTNGCKGNMCCSRWGYCGTTKAYCGTGCQSGPCNS. Cystine bridges form between Cys31–Cys42, Cys36–Cys48, Cys41–Cys55, and Cys59–Cys64. Residues 86 to 281 are catalytic; that stretch reads GTIASVITPA…GVTPGTNLSC (196 aa). The active-site Proton donor is Glu148. The N-linked (GlcNAc...) asparagine glycan is linked to Asn278.

This sequence belongs to the glycosyl hydrolase 19 family. Chitinase class I subfamily.

It carries out the reaction Random endo-hydrolysis of N-acetyl-beta-D-glucosaminide (1-&gt;4)-beta-linkages in chitin and chitodextrins.. This Arabidopsis thaliana (Mouse-ear cress) protein is Endochitinase At2g43610.